A 318-amino-acid chain; its full sequence is Olfactory receptor-like protein COR1 (318 aa).

Residues 1–26 (MASGNCTTPTTFILSGLTDNPGLQMP) lie on the Extracellular side of the membrane. N-linked (GlcNAc...) asparagine glycosylation is present at asparagine 5. A helical membrane pass occupies residues 27–49 (LFMVFLAIYTITLLTNLGLIALI). Residues 50 to 57 (SVDLHLQT) lie on the Cytoplasmic side of the membrane. Residues 58-79 (PMYIFLQNLSFTDAAYSTVITP) traverse the membrane as a helical segment. Residues 80 to 100 (KMLATFLEERKTISYVGCILQ) are Extracellular-facing. A disulfide bridge links cysteine 97 with cysteine 179. A helical transmembrane segment spans residues 101–120 (YFSFVLLTVTESLLLAVMAY). The Cytoplasmic segment spans residues 121–139 (DRYVAICKPLLYPSIMTKA). A helical membrane pass occupies residues 140–164 (VCWRLVESLYFLAFLNSLVHTSGLL). The Extracellular segment spans residues 165–205 (KLSFCYSNVVNHFFCDISPLFQISSSSIAISELLVIISGSL). A helical transmembrane segment spans residues 206-226 (FVMSSIIIILISYVFIILTVV). At 227–239 (MIRSKDGKYKAFS) the chain is on the cytoplasmic side. Residues 240-260 (TCTSHLMAVSLFHGTVIFMYL) form a helical membrane-spanning segment. At 261-271 (RPVKLFSLDTD) the chain is on the extracellular side. Residues 272 to 292 (KIASLFYTVVIPMLNPLIYSW) traverse the membrane as a helical segment. The Cytoplasmic portion of the chain corresponds to 293-318 (RNKEVKDALRRLTATTFGFIDSKAVQ).

It belongs to the G-protein coupled receptor 1 family.

Its subcellular location is the cell membrane. Odorant receptor. In Gallus gallus (Chicken), this protein is Olfactory receptor-like protein COR1 (COR1).